Here is a 63-residue protein sequence, read N- to C-terminus: Beta-defensin 38 (63 aa).

The N-terminal stretch at 1–21 (MKISCFLLLVLSLYLFQVNQA) is a signal peptide. 3 disulfides stabilise this stretch: cysteine 29–cysteine 58, cysteine 36–cysteine 51, and cysteine 41–cysteine 59.

It belongs to the beta-defensin family.

It localises to the secreted. Has antibacterial activity. The polypeptide is Beta-defensin 38 (Defb38) (Rattus norvegicus (Rat)).